The following is a 590-amino-acid chain: Auxin response factor 20 (590 aa).

Residues 126–224 (FTKVLTASDT…ELRVGIRRAR (99 aa)) constitute a DNA-binding region (TF-B3). A PB1 domain is found at 495–576 (RTCTKVQMQG…MVKKILIYSK (82 aa)).

This sequence belongs to the ARF family. As to quaternary structure, homodimers and heterodimers.

Its subcellular location is the nucleus. Auxin response factors (ARFs) are transcriptional factors that bind specifically to the DNA sequence 5'-TGTCTC-3' found in the auxin-responsive promoter elements (AuxREs). Could act as transcriptional activator or repressor. Formation of heterodimers with Aux/IAA proteins may alter their ability to modulate early auxin response genes expression. The protein is Auxin response factor 20 (ARF20) of Arabidopsis thaliana (Mouse-ear cress).